Here is a 324-residue protein sequence, read N- to C-terminus: dITP/XTP pyrophosphatase (324 aa).

The tract at residues 1–126 (MTKSIFEYKD…SDNKSDFGDV (126 aa)) is unknown. The segment at 127–324 (LLIATRNEGK…EVFPAWQNKQ (198 aa)) is NTP pyrophosphatase. 131-136 (TRNEGK) lines the substrate pocket. Asp193 serves as the catalytic Proton acceptor. Asp193 is a Mg(2+) binding site. Substrate contacts are provided by residues Ser194, 277–280 (FGYD), Lys300, and 305–306 (HR).

Belongs to the HAM1 NTPase family. As to quaternary structure, homodimer. It depends on Mg(2+) as a cofactor.

It carries out the reaction XTP + H2O = XMP + diphosphate + H(+). The enzyme catalyses dITP + H2O = dIMP + diphosphate + H(+). It catalyses the reaction ITP + H2O = IMP + diphosphate + H(+). Functionally, pyrophosphatase that catalyzes the hydrolysis of nucleoside triphosphates to their monophosphate derivatives, with a high preference for the non-canonical purine nucleotides XTP (xanthosine triphosphate), dITP (deoxyinosine triphosphate) and ITP. Seems to function as a house-cleaning enzyme that removes non-canonical purine nucleotides from the nucleotide pool, thus preventing their incorporation into DNA/RNA and avoiding chromosomal lesions. In Streptococcus thermophilus (strain ATCC BAA-250 / LMG 18311), this protein is dITP/XTP pyrophosphatase.